Here is a 341-residue protein sequence, read N- to C-terminus: NADH-ubiquinone oxidoreductase chain 2 (341 aa).

9 helical membrane-spanning segments follow: residues 8–28 (ILFI…NSWL), 60–80 (YFLT…LLML), 95–115 (MIIM…FWFP), 121–141 (LTWM…LMLI), 146–166 (IKYL…IGGL), 195–215 (SIWL…TFMF), 238–258 (FTLF…GFLP), 273–293 (FMLT…LRIC), and 321–341 (MIMT…YFMF).

The protein belongs to the complex I subunit 2 family.

It is found in the mitochondrion inner membrane. The enzyme catalyses a ubiquinone + NADH + 5 H(+)(in) = a ubiquinol + NAD(+) + 4 H(+)(out). Core subunit of the mitochondrial membrane respiratory chain NADH dehydrogenase (Complex I) that is believed to belong to the minimal assembly required for catalysis. Complex I functions in the transfer of electrons from NADH to the respiratory chain. The immediate electron acceptor for the enzyme is believed to be ubiquinone. The chain is NADH-ubiquinone oxidoreductase chain 2 (mt:ND2) from Drosophila melanogaster (Fruit fly).